The sequence spans 738 residues: Ent-kaurene synthase-like 1 (738 aa).

Positions 487, 491, 631, 632, and 639 each coordinate Mg(2+). The DDXXD motif signature appears at 487–491 (DDFFD).

It belongs to the terpene synthase family. Mg(2+) serves as cofactor.

The catalysed reaction is ent-copalyl diphosphate = ent-kaur-16-ene + diphosphate. Its pathway is secondary metabolite biosynthesis; terpenoid biosynthesis. Its function is as follows. Diterpene cyclase involved in the biosynthesis of labdane-related diterpenoids (LRDs) natural products. Catalyzes the cyclization of ent-CDP into ent-kaurene. The chain is Ent-kaurene synthase-like 1 from Ricinus communis (Castor bean).